The sequence spans 313 residues: Homoserine O-succinyltransferase (313 aa).

C142 acts as the Acyl-thioester intermediate in catalysis. Positions 163 and 192 each coordinate substrate. H235 functions as the Proton acceptor in the catalytic mechanism. E237 is an active-site residue. R249 contributes to the substrate binding site.

It belongs to the MetA family.

It is found in the cytoplasm. It catalyses the reaction L-homoserine + succinyl-CoA = O-succinyl-L-homoserine + CoA. The protein operates within amino-acid biosynthesis; L-methionine biosynthesis via de novo pathway; O-succinyl-L-homoserine from L-homoserine: step 1/1. Transfers a succinyl group from succinyl-CoA to L-homoserine, forming succinyl-L-homoserine. In Vibrio vulnificus (strain CMCP6), this protein is Homoserine O-succinyltransferase.